A 181-amino-acid polypeptide reads, in one-letter code: Oligoribonuclease (181 aa).

The 164-residue stretch at Leu-8–Leu-171 folds into the Exonuclease domain. Tyr-129 is a catalytic residue.

Belongs to the oligoribonuclease family.

It is found in the cytoplasm. Functionally, 3'-to-5' exoribonuclease specific for small oligoribonucleotides. The chain is Oligoribonuclease from Vibrio cholerae serotype O1 (strain ATCC 39541 / Classical Ogawa 395 / O395).